The primary structure comprises 362 residues: Biotin synthase (362 aa).

The 228-residue stretch at 46 to 273 folds into the Radical SAM core domain; it reads NEVQVSTLLS…ASHVRLSAGR (228 aa). Positions 61, 65, and 68 each coordinate [4Fe-4S] cluster. [2Fe-2S] cluster contacts are provided by Cys105, Cys136, Cys196, and Arg268. Residues 320–339 form a disordered region; the sequence is PAQRAQKPDQVQEEELLAEV.

This sequence belongs to the radical SAM superfamily. Biotin synthase family. As to quaternary structure, homodimer. [4Fe-4S] cluster is required as a cofactor. [2Fe-2S] cluster serves as cofactor.

It carries out the reaction (4R,5S)-dethiobiotin + (sulfur carrier)-SH + 2 reduced [2Fe-2S]-[ferredoxin] + 2 S-adenosyl-L-methionine = (sulfur carrier)-H + biotin + 2 5'-deoxyadenosine + 2 L-methionine + 2 oxidized [2Fe-2S]-[ferredoxin]. The protein operates within cofactor biosynthesis; biotin biosynthesis; biotin from 7,8-diaminononanoate: step 2/2. Catalyzes the conversion of dethiobiotin (DTB) to biotin by the insertion of a sulfur atom into dethiobiotin via a radical-based mechanism. This chain is Biotin synthase, found in Aeromonas hydrophila subsp. hydrophila (strain ATCC 7966 / DSM 30187 / BCRC 13018 / CCUG 14551 / JCM 1027 / KCTC 2358 / NCIMB 9240 / NCTC 8049).